Consider the following 336-residue polypeptide: Iron(3+)-hydroxamate import system permease protein FhuG (336 aa).

9 helical membrane-spanning segments follow: residues 9–29, 63–83, 91–111, 124–144, 155–175, 193–213, 245–265, 285–305, and 313–333; these read LIVMAVTFLLIVVVFFISLNL, IILSLLVGAGISVAGAILQSV, PGILGINAGGSLAVVLFIYFF, FMLPFSALAGAILAAFLIYIL, LILVGIGVNAGFNALLLIFQL, IWGANWNMIWAILPWIVILLL, ILLLAAVTLAASCVAAAGGIA, TLIPVSAFIGSFLFLLADTLA, and EIPVGLVISVLGAPYFIYLLM.

This sequence belongs to the binding-protein-dependent transport system permease family. FecCD subfamily. In terms of assembly, the complex is composed of an ATP-binding protein (FhuC), two transmembrane proteins (FhuB and FhuG) and a solute-binding protein (FhuD or YxeB).

It localises to the cell membrane. In terms of biological role, part of the ABC transporter complex FhuBGCD involved in iron(3+)-hydroxamate import. Responsible for the translocation of the substrate across the membrane. The protein is Iron(3+)-hydroxamate import system permease protein FhuG (fhuG) of Bacillus subtilis (strain 168).